The following is a 120-amino-acid chain: Putative cysteine proteinase inhibitor 11 (120 aa).

The first 24 residues, 1–24 (MARHPGLLLILLAAVAAVATTSRA), serve as a signal peptide directing secretion. The Secondary area of contact motif lies at 73-77 (QVVQG).

This sequence belongs to the cystatin family. Phytocystatin subfamily.

It is found in the secreted. Its function is as follows. Specific inhibitor of cysteine proteinases. Probably involved in the regulation of endogenous processes and in defense against pests and pathogens. The protein is Putative cysteine proteinase inhibitor 11 of Oryza sativa subsp. japonica (Rice).